Here is a 207-residue protein sequence, read N- to C-terminus: LexA repressor (207 aa).

The segment at residues 28–48 (RAEIAQKLGFKSANAAEEHLK) is a DNA-binding region (H-T-H motif). Residues Ser-124 and Lys-161 each act as for autocatalytic cleavage activity in the active site.

The protein belongs to the peptidase S24 family. Homodimer.

The enzyme catalyses Hydrolysis of Ala-|-Gly bond in repressor LexA.. Functionally, represses a number of genes involved in the response to DNA damage (SOS response), including recA and lexA. In the presence of single-stranded DNA, RecA interacts with LexA causing an autocatalytic cleavage which disrupts the DNA-binding part of LexA, leading to derepression of the SOS regulon and eventually DNA repair. This chain is LexA repressor, found in Aeromonas salmonicida (strain A449).